A 166-amino-acid chain; its full sequence is Short form salivary protein D7R5 (166 aa).

A signal peptide spans 1-22 (MEWRYFVVIALICPLIIVETLA). Intrachain disulfides connect C26-C58, C39-C166, and C98-C117.

Belongs to the PBP/GOBP family.

Its subcellular location is the secreted. In contrast to the related D7 salivary proteins, does not bind biogenic amines such as serotonin, noradrenaline, histamine and adrenaline. It is hypothesized that either D7r5 evolved an as yet unknown function or is becoming a pseudogene. This Anopheles gambiae (African malaria mosquito) protein is Short form salivary protein D7R5.